A 695-amino-acid chain; its full sequence is ATP-dependent zinc metalloprotease FtsH (695 aa).

At 1–15 (MNNNKQPKQGNFVKN) the chain is on the cytoplasmic side. A helical membrane pass occupies residues 16–36 (ILMWVILAIVVVVGFNFFFSS). At 37-139 (NQSSVDKISY…QASSSGMWVQ (103 aa)) the chain is on the extracellular side. A helical membrane pass occupies residues 140 to 160 (ILSYIIPMLLFVGIFWLMMGG). Over 161 to 695 (MGARGGGGGG…KEKSEDETAE (535 aa)) the chain is Cytoplasmic. Residue 233 to 240 (GPPGTGKT) participates in ATP binding. Histidine 456 provides a ligand contact to Zn(2+). The active site involves glutamate 457. The Zn(2+) site is built by histidine 460 and aspartate 532. A disordered region spans residues 657 to 695 (KDANANVDDFSNINIYNGDEKTDSKPEENKEKSEDETAE). A compositionally biased stretch (basic and acidic residues) spans 674-695 (GDEKTDSKPEENKEKSEDETAE).

In the central section; belongs to the AAA ATPase family. This sequence in the C-terminal section; belongs to the peptidase M41 family. Homohexamer. It depends on Zn(2+) as a cofactor.

It is found in the cell membrane. In terms of biological role, acts as a processive, ATP-dependent zinc metallopeptidase for both cytoplasmic and membrane proteins. Plays a role in the quality control of integral membrane proteins. The protein is ATP-dependent zinc metalloprotease FtsH of Lactococcus lactis subsp. lactis (strain IL1403) (Streptococcus lactis).